Reading from the N-terminus, the 968-residue chain is Alanine--tRNA ligase, cytoplasmic (968 aa).

Met-1 bears the N-acetylmethionine mark. A phosphoserine mark is found at Ser-3 and Ser-8. At Lys-19 the chain carries N6-acetyllysine. Residues Arg-77, His-95, Trp-176, and Ile-214 to Asn-216 contribute to the ATP site. Residues Asn-216 and Asp-239 each coordinate L-alanine. Residue Gly-243 participates in ATP binding. A phosphoserine mark is found at Ser-399 and Ser-555. Residues His-605, His-609, Cys-723, and His-727 each coordinate Zn(2+). The Nuclear localization signal motif lies at Arg-750–Ala-763. The residue at position 876 (Lys-876) is an N6-acetyllysine. Residue Lys-943 is modified to N6,N6,N6-trimethyllysine; alternate. At Lys-943 the chain carries N6,N6-dimethyllysine; alternate. Lys-943 is subject to N6-methyllysine; alternate.

Belongs to the class-II aminoacyl-tRNA synthetase family. As to quaternary structure, monomer. Interacts with ANKRD16; the interaction is direct. Zn(2+) serves as cofactor. ISGylated. In terms of processing, methylation at 'Lys-943' by METTL21C.

The protein resides in the cytoplasm. It localises to the nucleus. It carries out the reaction tRNA(Ala) + L-alanine + ATP = L-alanyl-tRNA(Ala) + AMP + diphosphate. The catalysed reaction is (S)-lactate + ATP + H(+) = (S)-lactoyl-AMP + diphosphate. It catalyses the reaction (S)-lactoyl-AMP + L-lysyl-[protein] = N(6)-[(S)-lactoyl]-L-lysyl-[protein] + AMP + 2 H(+). The protein lactyltransferase activity is inhibited by beta-alanine. Its function is as follows. Catalyzes the attachment of alanine to tRNA(Ala) in a two-step reaction: alanine is first activated by ATP to form Ala-AMP and then transferred to the acceptor end of tRNA(Ala). Also edits incorrectly charged tRNA(Ala) via its editing domain. In presence of high levels of lactate, also acts as a protein lactyltransferase that mediates lactylation of lysine residues in target proteins, such as TEAD1, TP53/p53 and YAP1. Protein lactylation takes place in a two-step reaction: lactate is first activated by ATP to form lactate-AMP and then transferred to lysine residues of target proteins. Acts as an inhibitor of TP53/p53 activity by catalyzing lactylation of TP53/p53. Acts as a positive regulator of the Hippo pathway by mediating lactylation of TEAD1 and YAP1. The chain is Alanine--tRNA ligase, cytoplasmic (AARS1) from Pongo abelii (Sumatran orangutan).